A 456-amino-acid chain; its full sequence is Alcohol acyltransferase 16 (456 aa).

Catalysis depends on proton acceptor residues His-167 and Asp-382.

Belongs to the plant acyltransferase family. As to expression, expressed in fruit.

It catalyses the reaction 3-(methylsulfanyl)propanoyl-CoA + butan-1-ol = butyl 3-(methylsulfanyl)propanoate + CoA. It carries out the reaction ethanol + benzoyl-CoA = ethyl benzoate + CoA. The catalysed reaction is butan-1-ol + benzoyl-CoA = butyl benzoate + CoA. The enzyme catalyses 2-(methylsulfanyl)acetyl-CoA + butan-1-ol = butyl 2-(methylsulfanyl)acetate + CoA. Involved in the biosynthesis of volatile esters which confer kiwifruit flavor. Alcohol acyl transferase that can use a wide range of alcohols as substrate to produce esters. Exhibits benzoyl-CoA:alcohol O-acyltransferase activity. The protein is Alcohol acyltransferase 16 of Actinidia chinensis var. chinensis (Chinese soft-hair kiwi).